A 56-amino-acid chain; its full sequence is ComX pheromone (56 aa).

The propeptide occupies 1-50; sequence MMQDLINYFLSYPEVLKKLKNREACLIGFSSNETETIIKAYNDYHLSSPT. Residue Trp-54 is modified to Tryptophan derivative. Trp-54 is lipidated: 3'-farnesyl-2',N2-cyclotryptophan.

As to quaternary structure, interacts directly with the sensor histidine kinase ComP and stimulates its activity. Post-translationally, trp-54 is modified by farnesylation, which is essential for activity. Modified by the tryptophan prenyltransferase ComQ before export to the extracellular environment. The type of isoprenyl derivative differs among the different pherotypes and depends on ComX primary sequence.

It localises to the secreted. Functionally, part of a major quorum-sensing system that regulates the development of genetic competence. Acts through the activation of the two-component regulatory system ComP/ComA composed of a sensor histidine kinase, ComP, and a response regulator, ComA. The polypeptide is ComX pheromone (Bacillus mojavensis).